Consider the following 222-residue polypeptide: uncharacterized protein (222 aa).

2 consecutive transmembrane segments (helical) span residues 22–42 (IRVILFIMAICMAMVLLFLYI) and 189–209 (AICLALGFFLSIVISVMFCLV).

It is found in the cell membrane. This is an uncharacterized protein from Escherichia coli (strain K12).